Reading from the N-terminus, the 72-residue chain is Translation initiation factor IF-1 (72 aa).

Residues 1–72 (MAKDDVIEVE…NRGRITYRFK (72 aa)) form the S1-like domain. Tyrosine 60 is modified (phosphotyrosine).

Belongs to the IF-1 family. In terms of assembly, component of the 30S ribosomal translation pre-initiation complex which assembles on the 30S ribosome in the order IF-2 and IF-3, IF-1 and N-formylmethionyl-tRNA(fMet); mRNA recruitment can occur at any time during PIC assembly.

It localises to the cytoplasm. One of the essential components for the initiation of protein synthesis. Stabilizes the binding of IF-2 and IF-3 on the 30S subunit to which N-formylmethionyl-tRNA(fMet) subsequently binds. Helps modulate mRNA selection, yielding the 30S pre-initiation complex (PIC). Upon addition of the 50S ribosomal subunit IF-1, IF-2 and IF-3 are released leaving the mature 70S translation initiation complex. The chain is Translation initiation factor IF-1 from Bacillus thuringiensis (strain Al Hakam).